The following is a 184-amino-acid chain: Bcl-2-modifying factor (184 aa).

The tract at residues 67–75 (DKATQTLSP) is interaction with DLC2. The short motif at 133–147 (IARKLQCIADQFHRL) is the BH3 element.

The protein belongs to the Bcl-2 family. Interacts with MCL1, BCL2, BCL2L1/BCL-Xl, BCL2A1 and BCL2L2/BCL-w. Interacts with the myosin V actin motor complex through its binding to DLC2. Isoform 1 is mainly expressed in B-lymphoid cells. Isoform 2 and isoform 3 are mainly expressed in B-CLL and normal B-cells.

Its function is as follows. May play a role in apoptosis. Isoform 1 seems to be the main initiator. The sequence is that of Bcl-2-modifying factor (BMF) from Homo sapiens (Human).